Reading from the N-terminus, the 456-residue chain is Glycine--tRNA ligase (456 aa).

Residues Arg98 and Glu168 each coordinate substrate. ATP contacts are provided by residues 200–202 (RNE), 210–215 (FRTREF), 285–286 (EL), and 329–332 (GVER). 215-219 (FEQME) lines the substrate pocket. 325 to 329 (EPSVG) provides a ligand contact to substrate.

Belongs to the class-II aminoacyl-tRNA synthetase family. Homodimer.

It is found in the cytoplasm. It catalyses the reaction tRNA(Gly) + glycine + ATP = glycyl-tRNA(Gly) + AMP + diphosphate. Its function is as follows. Catalyzes the attachment of glycine to tRNA(Gly). The sequence is that of Glycine--tRNA ligase from Mycoplasma mycoides subsp. mycoides SC (strain CCUG 32753 / NCTC 10114 / PG1).